Here is a 137-residue protein sequence, read N- to C-terminus: Seminal plasma sperm motility inhibitor (137 aa).

The signal sequence occupies residues 1 to 21 (MKLGSAIPWALLLSTXTLVST). Cys-30 and Cys-51 form a disulfide bridge. The CUB domain maps to 30 to 131 (CGGFLKNYSG…SSFNVYFYGI (102 aa)). N-linked (GlcNAc...) asparagine glycosylation is present at Asn-36.

Belongs to the spermadhesin family. Seminal plasma or sperm.

It is found in the secreted. In terms of biological role, inhibitor of sperm motility. The sequence is that of Seminal plasma sperm motility inhibitor (SPMI) from Sus scrofa (Pig).